The primary structure comprises 206 residues: ATP phosphoribosyltransferase (206 aa).

The protein belongs to the ATP phosphoribosyltransferase family. Short subfamily. As to quaternary structure, heteromultimer composed of HisG and HisZ subunits.

Its subcellular location is the cytoplasm. The catalysed reaction is 1-(5-phospho-beta-D-ribosyl)-ATP + diphosphate = 5-phospho-alpha-D-ribose 1-diphosphate + ATP. The protein operates within amino-acid biosynthesis; L-histidine biosynthesis; L-histidine from 5-phospho-alpha-D-ribose 1-diphosphate: step 1/9. Catalyzes the condensation of ATP and 5-phosphoribose 1-diphosphate to form N'-(5'-phosphoribosyl)-ATP (PR-ATP). Has a crucial role in the pathway because the rate of histidine biosynthesis seems to be controlled primarily by regulation of HisG enzymatic activity. The polypeptide is ATP phosphoribosyltransferase (Campylobacter curvus (strain 525.92)).